A 367-amino-acid polypeptide reads, in one-letter code: Heme A synthase (367 aa).

Helical transmembrane passes span 25-45 (AIRIWLGCVLLALFALVLVGG), 111-131 (FLARAMGVIFGVPLLFFVLTG), 137-157 (LWLPLGGIFLLGGLQGAIGWW), 174-194 (LATHLVTACLIFASCMWFMRA), and 211-231 (LAGLIAFMSLFQIYLGALVAG). Histidine 274 contacts heme. Transmembrane regions (helical) follow at residues 276–296 (LGAYALFAVVAVNMIISLRAA), 305–325 (SVVLFVLVLIQAILGITTLLL), and 327–347 (VPLHLALTHQAGALIVFGFAI). Histidine 335 contributes to the heme binding site.

It belongs to the COX15/CtaA family. Type 2 subfamily. As to quaternary structure, interacts with CtaB. It depends on heme b as a cofactor.

Its subcellular location is the cell membrane. The catalysed reaction is Fe(II)-heme o + 2 A + H2O = Fe(II)-heme a + 2 AH2. The protein operates within porphyrin-containing compound metabolism; heme A biosynthesis; heme A from heme O: step 1/1. Functionally, catalyzes the conversion of heme O to heme A by two successive hydroxylations of the methyl group at C8. The first hydroxylation forms heme I, the second hydroxylation results in an unstable dihydroxymethyl group, which spontaneously dehydrates, resulting in the formyl group of heme A. The sequence is that of Heme A synthase from Rhizobium rhizogenes (strain K84 / ATCC BAA-868) (Agrobacterium radiobacter).